A 283-amino-acid chain; its full sequence is Thymidylate synthase (283 aa).

Position 22 (Arg22) interacts with dUMP. The Nucleophile role is filled by Cys160. DUMP is bound by residues 180–183 (RSCD), Asn191, and 221–223 (HIY). Residue Asp183 participates in (6R)-5,10-methylene-5,6,7,8-tetrahydrofolate binding. Ser282 provides a ligand contact to (6R)-5,10-methylene-5,6,7,8-tetrahydrofolate.

It belongs to the thymidylate synthase family. Bacterial-type ThyA subfamily. In terms of assembly, homodimer.

Its subcellular location is the cytoplasm. It carries out the reaction dUMP + (6R)-5,10-methylene-5,6,7,8-tetrahydrofolate = 7,8-dihydrofolate + dTMP. The protein operates within pyrimidine metabolism; dTTP biosynthesis. Its function is as follows. Catalyzes the reductive methylation of 2'-deoxyuridine-5'-monophosphate (dUMP) to 2'-deoxythymidine-5'-monophosphate (dTMP) while utilizing 5,10-methylenetetrahydrofolate (mTHF) as the methyl donor and reductant in the reaction, yielding dihydrofolate (DHF) as a by-product. This enzymatic reaction provides an intracellular de novo source of dTMP, an essential precursor for DNA biosynthesis. The chain is Thymidylate synthase from Haemophilus influenzae (strain PittGG).